The following is a 210-amino-acid chain: Sortase A (210 aa).

Topologically, residues 1-5 are cytoplasmic; that stretch reads MNKQR. The chain crosses the membrane as a helical span at residues 6–26; the sequence is IYSIVAILLFVVGGVLIGKPF. Topologically, residues 27–210 are extracellular; it reads YDGYQAEKKQ…GDLVGTKAKK (184 aa). The Proton donor/acceptor role is filled by His126. Catalysis depends on Cys187, which acts as the Acyl-thioester intermediate.

This sequence belongs to the bacterial sortase family. Class A subfamily.

It is found in the cell membrane. Its activity is regulated as follows. Inhibited by thiol-reactive reagents. Its function is as follows. Transpeptidase that anchors surface proteins to the cell wall. Recognizes and modifies its substrate by proteolytic cleavage of a C-terminal sorting signal. Following cleavage, a covalent intermediate is formed via a thioester bond between the sortase and its substrate, which is then transferred and covalently attached to the cell wall. This sortase recognizes a Leu-Pro-x-Thr-Gly (LPXTG) motif, which is cleaved by the sortase between the threonine and glycine residues. Important for growth in macrophages. May be critical in the early stages of inhalation anthrax. This Bacillus anthracis protein is Sortase A.